Reading from the N-terminus, the 344-residue chain is Dihydroorotate dehydrogenase (quinone) (344 aa).

FMN-binding positions include 64–68 and T88; that span reads AGLDK. Substrate is bound at residue K68. 113 to 117 serves as a coordination point for substrate; the sequence is NRMGF. N144 and N177 together coordinate FMN. Substrate is bound at residue N177. S180 functions as the Nucleophile in the catalytic mechanism. A substrate-binding site is contributed by N182. FMN contacts are provided by K222 and T250. 251–252 contacts substrate; that stretch reads NT. FMN-binding positions include G273, G302, and 323-324; that span reads YS.

It belongs to the dihydroorotate dehydrogenase family. Type 2 subfamily. Monomer. FMN is required as a cofactor.

It is found in the cell membrane. The catalysed reaction is (S)-dihydroorotate + a quinone = orotate + a quinol. Its pathway is pyrimidine metabolism; UMP biosynthesis via de novo pathway; orotate from (S)-dihydroorotate (quinone route): step 1/1. Catalyzes the conversion of dihydroorotate to orotate with quinone as electron acceptor. The polypeptide is Dihydroorotate dehydrogenase (quinone) (Polynucleobacter necessarius subsp. necessarius (strain STIR1)).